A 119-amino-acid chain; its full sequence is Large ribosomal subunit protein bL20 (119 aa).

It belongs to the bacterial ribosomal protein bL20 family.

Functionally, binds directly to 23S ribosomal RNA and is necessary for the in vitro assembly process of the 50S ribosomal subunit. It is not involved in the protein synthesizing functions of that subunit. The sequence is that of Large ribosomal subunit protein bL20 from Rhodopseudomonas palustris (strain HaA2).